We begin with the raw amino-acid sequence, 405 residues long: Argininosuccinate synthase (405 aa).

Residues 10–18 (AYSGGLDTS) and Ala37 contribute to the ATP site. 2 residues coordinate L-citrulline: Tyr88 and Ser93. Residue Gly118 participates in ATP binding. Thr120, Asn124, and Asp125 together coordinate L-aspartate. Asn124 contacts L-citrulline. 5 residues coordinate L-citrulline: Arg128, Ser179, Ser188, Glu264, and Tyr276.

Belongs to the argininosuccinate synthase family. Type 1 subfamily. In terms of assembly, homotetramer.

Its subcellular location is the cytoplasm. It catalyses the reaction L-citrulline + L-aspartate + ATP = 2-(N(omega)-L-arginino)succinate + AMP + diphosphate + H(+). Its pathway is amino-acid biosynthesis; L-arginine biosynthesis; L-arginine from L-ornithine and carbamoyl phosphate: step 2/3. The chain is Argininosuccinate synthase from Pseudomonas savastanoi pv. phaseolicola (strain 1448A / Race 6) (Pseudomonas syringae pv. phaseolicola (strain 1448A / Race 6)).